Here is a 195-residue protein sequence, read N- to C-terminus: ATP-dependent Clp protease proteolytic subunit (195 aa).

Serine 97 acts as the Nucleophile in catalysis. Histidine 122 is a catalytic residue.

Belongs to the peptidase S14 family. In terms of assembly, fourteen ClpP subunits assemble into 2 heptameric rings which stack back to back to give a disk-like structure with a central cavity, resembling the structure of eukaryotic proteasomes.

Its subcellular location is the cytoplasm. It catalyses the reaction Hydrolysis of proteins to small peptides in the presence of ATP and magnesium. alpha-casein is the usual test substrate. In the absence of ATP, only oligopeptides shorter than five residues are hydrolyzed (such as succinyl-Leu-Tyr-|-NHMec, and Leu-Tyr-Leu-|-Tyr-Trp, in which cleavage of the -Tyr-|-Leu- and -Tyr-|-Trp bonds also occurs).. Its function is as follows. Cleaves peptides in various proteins in a process that requires ATP hydrolysis. Has a chymotrypsin-like activity. Plays a major role in the degradation of misfolded proteins. In Lactobacillus acidophilus (strain ATCC 700396 / NCK56 / N2 / NCFM), this protein is ATP-dependent Clp protease proteolytic subunit.